The chain runs to 279 residues: Probable endonuclease 4 (279 aa).

9 residues coordinate Zn(2+): H68, H108, E143, D177, H180, H214, D227, H229, and E259.

The protein belongs to the AP endonuclease 2 family. The cofactor is Zn(2+).

It catalyses the reaction Endonucleolytic cleavage to 5'-phosphooligonucleotide end-products.. In terms of biological role, endonuclease IV plays a role in DNA repair. It cleaves phosphodiester bonds at apurinic or apyrimidinic (AP) sites, generating a 3'-hydroxyl group and a 5'-terminal sugar phosphate. The sequence is that of Probable endonuclease 4 from Nitrosopumilus maritimus (strain SCM1).